A 202-amino-acid chain; its full sequence is Ion-translocating oxidoreductase complex subunit G (202 aa).

The helical transmembrane segment at 11 to 31 (ACLMGFFSFFSLSSVIFVKNI) threads the bilayer. Threonine 176 is modified (FMN phosphoryl threonine).

It belongs to the RnfG family. In terms of assembly, the complex is composed of six subunits: RnfA, RnfB, RnfC, RnfD, RnfE and RnfG. FMN is required as a cofactor.

The protein localises to the cell inner membrane. In terms of biological role, part of a membrane-bound complex that couples electron transfer with translocation of ions across the membrane. This Buchnera aphidicola subsp. Schizaphis graminum (strain Sg) protein is Ion-translocating oxidoreductase complex subunit G.